A 755-amino-acid chain; its full sequence is Metabotropic glutamate receptor-like protein B (755 aa).

Positions 1-23 (MKNLISIILLILIFFNYSKFVKS) are cleaved as a signal peptide. 3 N-linked (GlcNAc...) asparagine glycosylation sites follow: Asn-16, Asn-183, and Asn-273. Residues 24–385 (KNCKIAVLLS…VDYSSSMKLG (362 aa)) lie on the Extracellular side of the membrane. A helical transmembrane segment spans residues 386–406 (ITITSSICIFLCIISIIIVLV). Residues 407–417 (FRTARIIKSAS) are Cytoplasmic-facing. Residues 418–438 (PAFLFLILMGCILIFIGCIIF) form a helical membrane-spanning segment. The Extracellular segment spans residues 439 to 455 (SQSPNEGTCRARVWLLS). Residues 456 to 476 (IGYTIFLGSLLVKNWRIWLLF) form a helical membrane-spanning segment. Over 477 to 492 (DNPKLKKRSITNWKLY) the chain is Cytoplasmic. A helical transmembrane segment spans residues 493 to 513 (PWVAGILAADVLILAFWQGLG). Topologically, residues 514 to 541 (NIRSESRIGIDSLTKYQYTNVCSSNDQG) are extracellular. A helical transmembrane segment spans residues 542–562 (SIALYILLVFHGIKLLVACFI). The Cytoplasmic segment spans residues 563-578 (SFKIKVVDIDEFNESK). Residues 579-599 (PIASSVYIITFCLFIVIPLMV) traverse the membrane as a helical segment. Over 600-607 (SPQSVTSQ) the chain is Extracellular. A helical membrane pass occupies residues 608–628 (VTTICVCAIVTTLISIILLFG). Topologically, residues 629-755 (SKFYKMITQG…GEVEIDSNNL (127 aa)) are cytoplasmic. Disordered stretches follow at residues 656 to 676 (QSLEKKKTGEEDDSESSEENG) and 691 to 729 (FSSDTEDDENETQQIDEEKDEQIAGSNEDIIQPEENIEE). Acidic residues predominate over residues 694 to 710 (DTEDDENETQQIDEEKD).

The protein in the N-terminal section; belongs to the BMP lipoprotein family. This sequence in the C-terminal section; belongs to the G-protein coupled receptor 3 family. GABA-B receptor subfamily.

It is found in the membrane. The protein is Metabotropic glutamate receptor-like protein B (grlB) of Dictyostelium discoideum (Social amoeba).